The following is a 321-amino-acid chain: Lipoyl synthase (321 aa).

Positions 68, 73, 79, 94, 98, 101, and 308 each coordinate [4Fe-4S] cluster. One can recognise a Radical SAM core domain in the interval 80-297 (FNHGTATFMI…KELAESIGFT (218 aa)).

It belongs to the radical SAM superfamily. Lipoyl synthase family. [4Fe-4S] cluster is required as a cofactor.

The protein localises to the cytoplasm. The enzyme catalyses [[Fe-S] cluster scaffold protein carrying a second [4Fe-4S](2+) cluster] + N(6)-octanoyl-L-lysyl-[protein] + 2 oxidized [2Fe-2S]-[ferredoxin] + 2 S-adenosyl-L-methionine + 4 H(+) = [[Fe-S] cluster scaffold protein] + N(6)-[(R)-dihydrolipoyl]-L-lysyl-[protein] + 4 Fe(3+) + 2 hydrogen sulfide + 2 5'-deoxyadenosine + 2 L-methionine + 2 reduced [2Fe-2S]-[ferredoxin]. It participates in protein modification; protein lipoylation via endogenous pathway; protein N(6)-(lipoyl)lysine from octanoyl-[acyl-carrier-protein]: step 2/2. Functionally, catalyzes the radical-mediated insertion of two sulfur atoms into the C-6 and C-8 positions of the octanoyl moiety bound to the lipoyl domains of lipoate-dependent enzymes, thereby converting the octanoylated domains into lipoylated derivatives. The polypeptide is Lipoyl synthase (Shewanella pealeana (strain ATCC 700345 / ANG-SQ1)).